Reading from the N-terminus, the 618-residue chain is UvrABC system protein C (618 aa).

The region spanning 13–92 (DKPGVYLMKN…IKKYRPKYNI (80 aa)) is the GIY-YIG domain. One can recognise a UVR domain in the interval 204–239 (LDIVENFKLNMERAAENLEFEKAAMLRDKINIIEKI).

The protein belongs to the UvrC family. In terms of assembly, interacts with UvrB in an incision complex.

It is found in the cytoplasm. The UvrABC repair system catalyzes the recognition and processing of DNA lesions. UvrC both incises the 5' and 3' sides of the lesion. The N-terminal half is responsible for the 3' incision and the C-terminal half is responsible for the 5' incision. In Clostridium botulinum (strain Langeland / NCTC 10281 / Type F), this protein is UvrABC system protein C.